The primary structure comprises 372 residues: Mitogen-activated protein kinase homolog NTF3 (372 aa).

The region spanning 32–319 (YVPIKPIGRG…VIEALQHPYM (288 aa)) is the Protein kinase domain. Residues 38-46 (IGRGAYGIV) and Lys-61 each bind ATP. Asp-158 serves as the catalytic Proton acceptor. Thr-191 is subject to Phosphothreonine. A TXY motif is present at residues 191-193 (TEY). Position 193 is a phosphotyrosine (Tyr-193).

The protein belongs to the protein kinase superfamily. CMGC Ser/Thr protein kinase family. MAP kinase subfamily. Requires Mg(2+) as cofactor. Dually phosphorylated on Thr-191 and Tyr-193, which activates the enzyme. Very low autophosphorylation, although dramatically increased when Mn(2+) is added to the reaction instead of Mg(2+). As to expression, ubiquitous.

The enzyme catalyses L-seryl-[protein] + ATP = O-phospho-L-seryl-[protein] + ADP + H(+). It catalyses the reaction L-threonyl-[protein] + ATP = O-phospho-L-threonyl-[protein] + ADP + H(+). With respect to regulation, activated by tyrosine and threonine phosphorylation. The chain is Mitogen-activated protein kinase homolog NTF3 (NTF3) from Nicotiana tabacum (Common tobacco).